Reading from the N-terminus, the 103-residue chain is Small ribosomal subunit protein uS10 (103 aa).

It belongs to the universal ribosomal protein uS10 family. In terms of assembly, part of the 30S ribosomal subunit.

Its function is as follows. Involved in the binding of tRNA to the ribosomes. The chain is Small ribosomal subunit protein uS10 from Escherichia coli O127:H6 (strain E2348/69 / EPEC).